The chain runs to 303 residues: Sushi domain-containing protein 6 (303 aa).

An N-terminal signal peptide occupies residues 1–39 (MCHGRIAPKSTSVFAVASVGHGVFLPLVILCTLLGDGLA). In terms of domain architecture, Sushi spans 40-104 (SVCPLPPEPE…KPAMEISCRL (65 aa)). At 40–120 (SVCPLPPEPE…HTSLGVPTLS (81 aa)) the chain is on the extracellular side. 2 disulfide bridges follow: Cys42/Cys89 and Cys74/Cys102. The helical transmembrane segment at 121 to 141 (IVASTASSVALILLLVVLFVL) threads the bilayer. Topologically, residues 142–303 (LQPKLKSFHH…TDDIPLLKEA (162 aa)) are cytoplasmic. Disordered stretches follow at residues 199-237 (VLSE…GQSG) and 263-282 (GSGN…NSDI).

The protein localises to the membrane. Functionally, may play a role in growth-suppressive activity and cell death. May be involved in the production of chemokine molecules in umbilical vein endothelial cells (HUVECs) cultured in THP1 monocyte LPS-induced medium. Plays a role in preventing tumor onset. The chain is Sushi domain-containing protein 6 from Homo sapiens (Human).